The sequence spans 100 residues: Integration host factor subunit alpha (100 aa).

The interval 54–73 is disordered; the sequence is DLRDKRQRPGRNPKTGEEIP.

The protein belongs to the bacterial histone-like protein family. In terms of assembly, heterodimer of an alpha and a beta chain.

In terms of biological role, this protein is one of the two subunits of integration host factor, a specific DNA-binding protein that functions in genetic recombination as well as in transcriptional and translational control. In Pseudomonas aeruginosa (strain UCBPP-PA14), this protein is Integration host factor subunit alpha.